The chain runs to 367 residues: Peptide chain release factor 2 (367 aa).

Gln-254 carries the post-translational modification N5-methylglutamine.

Belongs to the prokaryotic/mitochondrial release factor family. Post-translationally, methylated by PrmC. Methylation increases the termination efficiency of RF2.

The protein localises to the cytoplasm. Peptide chain release factor 2 directs the termination of translation in response to the peptide chain termination codons UGA and UAA. In Variovorax paradoxus (strain S110), this protein is Peptide chain release factor 2.